The primary structure comprises 520 residues: Ubiquitin carboxyl-terminal hydrolase MINDY-1 (520 aa).

The segment at 1–155 is disordered; that stretch reads MADSCADTVD…ENEGAVAGAM (155 aa). Residues 26 to 37 show a composition bias toward basic and acidic residues; sequence KNEDLEQTKPQK. Positions 43-54 are enriched in polar residues; sequence TEESSACVSQIK. Positions 77–86 are enriched in low complexity; sequence ATSSASVTSK. Polar residues-rich tracts occupy residues 93-112 and 132-146; these read VINSQSYTPSQSEATPSFSM and SAKSARDGNQVSVQE. The active-site Nucleophile is the C189. H371 functions as the Proton acceptor in the catalytic mechanism. 2 disordered regions span residues 422–441 and 467–520; these read SQKPSAAAAQPSTQQQQQMQ and ELAR…CCIL. The ubiquitin-binding domain (UBD) stretch occupies residues 441 to 479; the sequence is QIDQDYLVAMSLQQEQGEAPGPLSDLELARQLQQEEYQQ. The segment covering 469–498 has biased composition (low complexity); the sequence is ARQLQQEEYQQPQTQQQQQQQPSAGQMRGQ. A compositionally biased stretch (basic and acidic residues) spans 511–520; it reads KKEETDCCIL.

The protein belongs to the MINDY deubiquitinase family. FAM63 subfamily.

The enzyme catalyses Thiol-dependent hydrolysis of ester, thioester, amide, peptide and isopeptide bonds formed by the C-terminal Gly of ubiquitin (a 76-residue protein attached to proteins as an intracellular targeting signal).. Hydrolase that can specifically remove 'Lys-48'-linked conjugated ubiquitin from proteins. May play a regulatory role at the level of protein turnover. The protein is Ubiquitin carboxyl-terminal hydrolase MINDY-1 (mindy1) of Danio rerio (Zebrafish).